A 145-amino-acid polypeptide reads, in one-letter code: MAKKITGYIRLQIKAGEANPSPPVGPALGQHGVNIREFCESFNTATKNIEKGLPTPVIITVYADRTFSFITKTPPASVLLKKFVLKGKSGSARPNTEKVGKATRQQLEEIAKMKTPDLTAADLEAAIRTIAGTARSMGIDVEGVE.

This sequence belongs to the universal ribosomal protein uL11 family. Part of the ribosomal stalk of the 50S ribosomal subunit. Interacts with L10 and the large rRNA to form the base of the stalk. L10 forms an elongated spine to which L12 dimers bind in a sequential fashion forming a multimeric L10(L12)X complex. One or more lysine residues are methylated.

In terms of biological role, forms part of the ribosomal stalk which helps the ribosome interact with GTP-bound translation factors. The protein is Large ribosomal subunit protein uL11 of Coxiella burnetii (strain CbuK_Q154) (Coxiella burnetii (strain Q154)).